A 212-amino-acid chain; its full sequence is Uridine kinase (212 aa).

12–19 (GGSGGGKT) serves as a coordination point for ATP.

Belongs to the uridine kinase family.

The protein resides in the cytoplasm. The enzyme catalyses uridine + ATP = UMP + ADP + H(+). It carries out the reaction cytidine + ATP = CMP + ADP + H(+). Its pathway is pyrimidine metabolism; CTP biosynthesis via salvage pathway; CTP from cytidine: step 1/3. The protein operates within pyrimidine metabolism; UMP biosynthesis via salvage pathway; UMP from uridine: step 1/1. The polypeptide is Uridine kinase (Streptococcus pneumoniae serotype 2 (strain D39 / NCTC 7466)).